Consider the following 840-residue polypeptide: UPF0508 protein SCY_2952 (840 aa).

The protein belongs to the UPF0508 family.

This is UPF0508 protein SCY_2952 from Saccharomyces cerevisiae (strain YJM789) (Baker's yeast).